The sequence spans 101 residues: Small ribosomal subunit protein uS14 (101 aa).

This sequence belongs to the universal ribosomal protein uS14 family. As to quaternary structure, part of the 30S ribosomal subunit. Contacts proteins S3 and S10.

In terms of biological role, binds 16S rRNA, required for the assembly of 30S particles and may also be responsible for determining the conformation of the 16S rRNA at the A site. This Marinobacter nauticus (strain ATCC 700491 / DSM 11845 / VT8) (Marinobacter aquaeolei) protein is Small ribosomal subunit protein uS14.